A 309-amino-acid polypeptide reads, in one-letter code: tRNA dimethylallyltransferase (309 aa).

9–16 (GPTAVGKT) contacts ATP. 11 to 16 (TAVGKT) is a substrate binding site. Residues 34 to 37 (DSMQ) are interaction with substrate tRNA.

This sequence belongs to the IPP transferase family. As to quaternary structure, monomer. It depends on Mg(2+) as a cofactor.

It catalyses the reaction adenosine(37) in tRNA + dimethylallyl diphosphate = N(6)-dimethylallyladenosine(37) in tRNA + diphosphate. Catalyzes the transfer of a dimethylallyl group onto the adenine at position 37 in tRNAs that read codons beginning with uridine, leading to the formation of N6-(dimethylallyl)adenosine (i(6)A). This Clostridium acetobutylicum (strain ATCC 824 / DSM 792 / JCM 1419 / IAM 19013 / LMG 5710 / NBRC 13948 / NRRL B-527 / VKM B-1787 / 2291 / W) protein is tRNA dimethylallyltransferase.